We begin with the raw amino-acid sequence, 81 residues long: MNKKLSIIFLIFALIASVLCSAEDPHLFHSSSTTTTTSSSGGTSGTDSSINTGSSYSGSGSGSGSTGGSGSGSGSGTAKWK.

Residues Met-1–Ala-22 form the signal peptide. The segment at His-29–Lys-81 is disordered. The span at Ser-30–Gly-58 shows a compositional bias: low complexity. Positions Ser-59–Ser-75 are enriched in gly residues.

It localises to the secreted. This is an uncharacterized protein from Dictyostelium discoideum (Social amoeba).